Reading from the N-terminus, the 431-residue chain is Enolase (431 aa).

Positions 27–47 (LESGHSGRAAVPSGASTGSRE) are disordered. Glutamine 163 serves as a coordination point for (2R)-2-phosphoglycerate. Glutamate 205 (proton donor) is an active-site residue. Mg(2+)-binding residues include aspartate 242, glutamate 285, and aspartate 312. (2R)-2-phosphoglycerate contacts are provided by lysine 337, arginine 366, serine 367, and lysine 388. Catalysis depends on lysine 337, which acts as the Proton acceptor.

This sequence belongs to the enolase family. Requires Mg(2+) as cofactor.

It localises to the cytoplasm. The protein resides in the secreted. It is found in the cell surface. The catalysed reaction is (2R)-2-phosphoglycerate = phosphoenolpyruvate + H2O. It functions in the pathway carbohydrate degradation; glycolysis; pyruvate from D-glyceraldehyde 3-phosphate: step 4/5. Its function is as follows. Catalyzes the reversible conversion of 2-phosphoglycerate (2-PG) into phosphoenolpyruvate (PEP). It is essential for the degradation of carbohydrates via glycolysis. In Oleidesulfovibrio alaskensis (strain ATCC BAA-1058 / DSM 17464 / G20) (Desulfovibrio alaskensis), this protein is Enolase.